A 677-amino-acid polypeptide reads, in one-letter code: MGHNDSVETMDEISNPNNILLPHDGTGLDATGISGSQEPYGMVDVLNPDSLKDDSNVDEPLIEDIVNPSLDPEGVVSAEPSNEVGTPLLQQPISLDHVITRPASAGGVYSIGNSSTSSAAKLSDGDLTNATDPLLNNAHGHGQPSSESQSHSNGYHKQGQSQQPLLSLNKRKLLAKAHVDKHHSKKKLSTTRARPAFVNKLWSMVNDKSNEKFIHWSTSGESIVVPNRERFVQEVLPKYFKHSNFASFVRQLNMYGWHKVQDVKSGSMLSNNDSRWEFENENFKRGKEYLLENIVRQKSNTNILGGTTNAEVDIHILLNELETVKYNQLAIAEDLKRITKDNEMLWKENMMARERHQSQQQVLEKLLRFLSSVFGPNSAKTIGNGFQPDLIHELSDMQVNHMSNNNHNNTGNINPNAYHNETDDPMANVFGPLTPTDQGKVPLQDYKLRPRLLLKNRSMSSSSSSNLNQRQSPQNRIVGQSPPPQQQQQQQQQQGQPQGQQFSYPIQGGNQMMNQLGSPIGTQVGSPVGSQYGNQYGNQYSNQFGNQLQQQTSRPALHHGSNGEIRELTPSIVSSDSPDPAFFQDLQNNIDKQEESIQEIQDWITKLNPGPGEDGNTPIFPELNMPSYFANTGGSGQSEQPSDYGDSQIEELRNSRLHEPDRSFEEKNNGQKRRRAA.

Disordered regions lie at residues 1–56 (MGHN…DDSN) and 115–164 (STSS…SQQP). Composition is skewed to polar residues over residues 115 to 131 (STSS…TNAT) and 143 to 164 (QPSS…SQQP). Residues 193-297 (ARPAFVNKLW…EYLLENIVRQ (105 aa)) mediate DNA binding. The tract at residues 320–373 (ELETVKYNQLAIAEDLKRITKDNEMLWKENMMARERHQSQQQVLEKLLRFLSSV) is involved in trimerization. Low complexity-rich tracts occupy residues 400-416 (NHMS…INPN) and 457-501 (RSMS…QGQQ). Disordered stretches follow at residues 400–444 (NHMS…VPLQ), 457–541 (RSMS…NQYS), and 606–677 (KLNP…RRAA). The segment at 466-677 (NLNQRQSPQN…NNGQKRRRAA (212 aa)) is activatory. Composition is skewed to polar residues over residues 502-541 (FSYP…NQYS) and 629-641 (FANT…SEQP). Over residues 650 to 669 (EELRNSRLHEPDRSFEEKNN) the composition is skewed to basic and acidic residues.

It belongs to the HSF family. In terms of assembly, homotrimer. Homotrimerization increases the affinity of HSF1 to DNA. Post-translationally, exhibits temperature-dependent phosphorylation.

Its subcellular location is the nucleus. Functionally, DNA-binding transcription factor that specifically binds heat shock promoter elements (HSE) and activates transcription. The protein is Heat shock transcription factor of Kluyveromyces lactis (strain ATCC 8585 / CBS 2359 / DSM 70799 / NBRC 1267 / NRRL Y-1140 / WM37) (Yeast).